A 37-amino-acid chain; its full sequence is Protein YnaM (37 aa).

The chain crosses the membrane as a helical span at residues 4–24 (ILIITSLLIIFSIFSHALIKL).

The protein localises to the cell inner membrane. The chain is Protein YnaM from Escherichia coli (strain K12).